We begin with the raw amino-acid sequence, 39 residues long: Pro-opiomelanocortin (39 aa).

Residue S1 is modified to N-acetylserine. Valine amide is present on V13. S31 carries the phosphoserine modification.

It belongs to the POMC family.

The protein resides in the secreted. Precursor protein for pituitary hormones that regulate stress and environmental adaptation. In terms of biological role, stimulates the adrenal glands to release cortisol. Functionally, anorexigenic peptide. Increases the pigmentation of skin by increasing melanin production in melanocytes. The protein is Pro-opiomelanocortin (POMC) of Balaenoptera borealis (Sei whale).